The primary structure comprises 486 residues: Glycogen synthase 2 (486 aa).

Lys-15 is a binding site for ADP-alpha-D-glucose.

The protein belongs to the glycosyltransferase 1 family. Bacterial/plant glycogen synthase subfamily.

The catalysed reaction is [(1-&gt;4)-alpha-D-glucosyl](n) + ADP-alpha-D-glucose = [(1-&gt;4)-alpha-D-glucosyl](n+1) + ADP + H(+). It functions in the pathway glycan biosynthesis; glycogen biosynthesis. Its function is as follows. Synthesizes alpha-1,4-glucan chains using ADP-glucose. The chain is Glycogen synthase 2 (glgA2) from Rhizobium meliloti (strain 1021) (Ensifer meliloti).